A 435-amino-acid polypeptide reads, in one-letter code: MGKQEVRTRSGERVAIVAGLRTPFARQSTEFGQVPAVDLGKMVVQEMMARTAIDPKLIEQVVFGQVVQMPEAPNIAREIVLGTGMSINTDAYSVTRACATSFQAAVNVAESIMAGSIDIGIAGGADSSSVLPIGVSKKLAASLLALSKTKTVGQKLKLLSNLSFKDLMPVPPAVAEYSTGLSMGQTAEQMAKSYAISRAEQDALAHRSHTLAAQAWTEGKIRDEVMTAFPEPYKKWLDMDNNIRMDSKLESYAKLRPAFDRQYGSVTAANSTPLTDGAAAIMLMREGKAKELGLEIMGYIRSYAFAAIGVEKDMLMGPSYATPIALDRAGITLNDLTLIDMHEAFAAQTLANLKMFASDKFAQEQLGRAQAIGEVDMSKFNVLGGSLAYGHPFAATGARMITQTLRELKRRGGGLALNTACAAGGLGAAMILEVE.

Cysteine 98 functions as the Acyl-thioester intermediate in the catalytic mechanism. Active-site proton acceptor residues include histidine 391 and cysteine 421.

It belongs to the thiolase-like superfamily. Thiolase family. As to quaternary structure, heterotetramer of two alpha chains (FadJ) and two beta chains (FadI).

The protein localises to the cytoplasm. The enzyme catalyses an acyl-CoA + acetyl-CoA = a 3-oxoacyl-CoA + CoA. The protein operates within lipid metabolism; fatty acid beta-oxidation. Catalyzes the final step of fatty acid oxidation in which acetyl-CoA is released and the CoA ester of a fatty acid two carbons shorter is formed. This is 3-ketoacyl-CoA thiolase from Vibrio cholerae serotype O1 (strain ATCC 39541 / Classical Ogawa 395 / O395).